Here is a 299-residue protein sequence, read N- to C-terminus: tRNA dimethylallyltransferase (299 aa).

13–20 is a binding site for ATP; that stretch reads GPTASGKT. Position 15–20 (15–20) interacts with substrate; it reads TASGKT. Residues 38-41 form an interaction with substrate tRNA region; sequence DSRQ.

It belongs to the IPP transferase family. As to quaternary structure, monomer. Mg(2+) is required as a cofactor.

It catalyses the reaction adenosine(37) in tRNA + dimethylallyl diphosphate = N(6)-dimethylallyladenosine(37) in tRNA + diphosphate. In terms of biological role, catalyzes the transfer of a dimethylallyl group onto the adenine at position 37 in tRNAs that read codons beginning with uridine, leading to the formation of N6-(dimethylallyl)adenosine (i(6)A). The chain is tRNA dimethylallyltransferase from Prochlorococcus marinus subsp. pastoris (strain CCMP1986 / NIES-2087 / MED4).